The sequence spans 487 residues: Glutamyl-tRNA(Gln) amidotransferase subunit A (487 aa).

Residues K79 and S158 each act as charge relay system in the active site. The active-site Acyl-ester intermediate is the S182.

Belongs to the amidase family. GatA subfamily. In terms of assembly, heterotrimer of A, B and C subunits.

The catalysed reaction is L-glutamyl-tRNA(Gln) + L-glutamine + ATP + H2O = L-glutaminyl-tRNA(Gln) + L-glutamate + ADP + phosphate + H(+). Allows the formation of correctly charged Gln-tRNA(Gln) through the transamidation of misacylated Glu-tRNA(Gln) in organisms which lack glutaminyl-tRNA synthetase. The reaction takes place in the presence of glutamine and ATP through an activated gamma-phospho-Glu-tRNA(Gln). This is Glutamyl-tRNA(Gln) amidotransferase subunit A from Ehrlichia ruminantium (strain Welgevonden).